Reading from the N-terminus, the 120-residue chain is Putative gamma-glutamylcyclotransferase MJ1514 (120 aa).

7–10 (YGSL) provides a ligand contact to substrate. Glu74 serves as the catalytic Proton acceptor.

This sequence belongs to the gamma-glutamylcyclotransferase family.

In terms of biological role, putative gamma-glutamylcyclotransferase. In Methanocaldococcus jannaschii (strain ATCC 43067 / DSM 2661 / JAL-1 / JCM 10045 / NBRC 100440) (Methanococcus jannaschii), this protein is Putative gamma-glutamylcyclotransferase MJ1514.